Consider the following 75-residue polypeptide: U6-lycotoxin-Ls1d (75 aa).

A signal peptide spans 1–21 (MKLLFFTALVLVVISLIEVEA). Positions 22–25 (ENER) are excised as a propeptide.

It belongs to the neurotoxin 19 (CSTX) family. 06 (U6-Lctx) subfamily. Contains 4 disulfide bonds. In terms of tissue distribution, expressed by the venom gland.

Its subcellular location is the secreted. The protein is U6-lycotoxin-Ls1d of Lycosa singoriensis (Wolf spider).